The chain runs to 175 residues: Crossover junction endodeoxyribonuclease RuvC (175 aa).

Residues aspartate 7, glutamate 68, and aspartate 141 contribute to the active site. Positions 7, 68, and 141 each coordinate Mg(2+).

Belongs to the RuvC family. Homodimer which binds Holliday junction (HJ) DNA. The HJ becomes 2-fold symmetrical on binding to RuvC with unstacked arms; it has a different conformation from HJ DNA in complex with RuvA. In the full resolvosome a probable DNA-RuvA(4)-RuvB(12)-RuvC(2) complex forms which resolves the HJ. The cofactor is Mg(2+).

Its subcellular location is the cytoplasm. The enzyme catalyses Endonucleolytic cleavage at a junction such as a reciprocal single-stranded crossover between two homologous DNA duplexes (Holliday junction).. Functionally, the RuvA-RuvB-RuvC complex processes Holliday junction (HJ) DNA during genetic recombination and DNA repair. Endonuclease that resolves HJ intermediates. Cleaves cruciform DNA by making single-stranded nicks across the HJ at symmetrical positions within the homologous arms, yielding a 5'-phosphate and a 3'-hydroxyl group; requires a central core of homology in the junction. The consensus cleavage sequence is 5'-(A/T)TT(C/G)-3'. Cleavage occurs on the 3'-side of the TT dinucleotide at the point of strand exchange. HJ branch migration catalyzed by RuvA-RuvB allows RuvC to scan DNA until it finds its consensus sequence, where it cleaves and resolves the cruciform DNA. The sequence is that of Crossover junction endodeoxyribonuclease RuvC from Salinispora arenicola (strain CNS-205).